Reading from the N-terminus, the 1182-residue chain is DNA-directed RNA polymerase subunit beta (1182 aa).

Belongs to the RNA polymerase beta chain family. In terms of assembly, the RNAP catalytic core consists of 2 alpha, 1 beta, 1 beta' and 1 omega subunit. When a sigma factor is associated with the core the holoenzyme is formed, which can initiate transcription.

The catalysed reaction is RNA(n) + a ribonucleoside 5'-triphosphate = RNA(n+1) + diphosphate. In terms of biological role, DNA-dependent RNA polymerase catalyzes the transcription of DNA into RNA using the four ribonucleoside triphosphates as substrates. The sequence is that of DNA-directed RNA polymerase subunit beta from Fervidobacterium nodosum (strain ATCC 35602 / DSM 5306 / Rt17-B1).